Reading from the N-terminus, the 160-residue chain is 3-dehydroquinate dehydratase (160 aa).

Residue tyrosine 22 is the Proton acceptor of the active site. Residues asparagine 73, histidine 79, and aspartate 86 each coordinate substrate. The Proton donor role is filled by histidine 99. Substrate is bound by residues 100-101 (IS) and arginine 110.

It belongs to the type-II 3-dehydroquinase family. Homododecamer.

The enzyme catalyses 3-dehydroquinate = 3-dehydroshikimate + H2O. Its pathway is metabolic intermediate biosynthesis; chorismate biosynthesis; chorismate from D-erythrose 4-phosphate and phosphoenolpyruvate: step 3/7. Catalyzes a trans-dehydration via an enolate intermediate. In Sulfurimonas denitrificans (strain ATCC 33889 / DSM 1251) (Thiomicrospira denitrificans (strain ATCC 33889 / DSM 1251)), this protein is 3-dehydroquinate dehydratase.